The sequence spans 444 residues: Deoxyguanosinetriphosphate triphosphohydrolase-like protein (444 aa).

Residues methionine 1 to glutamine 26 form a disordered region. The 192-residue stretch at arginine 59 to alanine 250 folds into the HD domain.

Belongs to the dGTPase family. Type 2 subfamily.

The chain is Deoxyguanosinetriphosphate triphosphohydrolase-like protein from Shewanella sediminis (strain HAW-EB3).